We begin with the raw amino-acid sequence, 75 residues long: DNA-directed RNA polymerase subunit omega (75 aa).

This sequence belongs to the RNA polymerase subunit omega family. As to quaternary structure, in cyanobacteria the RNAP catalytic core is composed of 2 alpha, 1 beta, 1 beta', 1 gamma and 1 omega subunit. When a sigma factor is associated with the core the holoenzyme is formed, which can initiate transcription.

It catalyses the reaction RNA(n) + a ribonucleoside 5'-triphosphate = RNA(n+1) + diphosphate. Its function is as follows. Promotes RNA polymerase assembly. Latches the N- and C-terminal regions of the beta' subunit thereby facilitating its interaction with the beta and alpha subunits. This is DNA-directed RNA polymerase subunit omega from Microcystis aeruginosa (strain NIES-843 / IAM M-2473).